We begin with the raw amino-acid sequence, 236 residues long: Pyridoxal 5'-phosphate synthase subunit PdxT (236 aa).

L-glutamine is bound at residue 61–63 (GES). The active-site Nucleophile is the cysteine 93. L-glutamine is bound by residues arginine 127 and 163–164 (IR). Residues histidine 215 and glutamate 217 each act as charge relay system in the active site.

Belongs to the glutaminase PdxT/SNO family. In terms of assembly, in the presence of PdxS, forms a dodecamer of heterodimers. Only shows activity in the heterodimer.

The enzyme catalyses aldehydo-D-ribose 5-phosphate + D-glyceraldehyde 3-phosphate + L-glutamine = pyridoxal 5'-phosphate + L-glutamate + phosphate + 3 H2O + H(+). It catalyses the reaction L-glutamine + H2O = L-glutamate + NH4(+). It functions in the pathway cofactor biosynthesis; pyridoxal 5'-phosphate biosynthesis. Catalyzes the hydrolysis of glutamine to glutamate and ammonia as part of the biosynthesis of pyridoxal 5'-phosphate. The resulting ammonia molecule is channeled to the active site of PdxS. The chain is Pyridoxal 5'-phosphate synthase subunit PdxT from Arthrobacter sp. (strain FB24).